The following is a 359-amino-acid chain: MTKLPKLSSNSSLLGLSSEDLEEFARQEGEKSFRGRQIHEWIYQRGAKSLDSISVLPKKWRDSLVRKGIQIGRLDEINRVVAEDETLKLLMGTFDGEIVETVGIPTDKRLTVCVSSQIGCPMGCKFCATGKGGLNRSLDVNEIVDQVISVRETMNRRPTHVVFMGMGEPLLNIRNVLDSIECLTSDIGIGQRKITVSTVGIPNTLSDLAKLAQDRLGRVKFTLAVSLHAPNQTLRELIIPSASSYPINSLLKDCKKYIELTGRRVSFEYILLGGLNDKDIHAEQLANLMRGFQSHVNLIAYNPIAEENFKRPSQSRVNAFRELLENRGVAVSVRASRGRDKDAACGQLRRQTIDKIKIN.

Catalysis depends on glutamate 100, which acts as the Proton acceptor. A Radical SAM core domain is found at 106 to 340 (TDKRLTVCVS…VSVRASRGRD (235 aa)). Cysteine 113 and cysteine 345 are disulfide-bonded. 3 residues coordinate [4Fe-4S] cluster: cysteine 120, cysteine 124, and cysteine 127. Residues 167-168 (GE), serine 197, 226-228 (SLH), and asparagine 302 contribute to the S-adenosyl-L-methionine site. Residue cysteine 345 is the S-methylcysteine intermediate of the active site.

Belongs to the radical SAM superfamily. RlmN family. It depends on [4Fe-4S] cluster as a cofactor.

It is found in the cytoplasm. It catalyses the reaction adenosine(2503) in 23S rRNA + 2 reduced [2Fe-2S]-[ferredoxin] + 2 S-adenosyl-L-methionine = 2-methyladenosine(2503) in 23S rRNA + 5'-deoxyadenosine + L-methionine + 2 oxidized [2Fe-2S]-[ferredoxin] + S-adenosyl-L-homocysteine. It carries out the reaction adenosine(37) in tRNA + 2 reduced [2Fe-2S]-[ferredoxin] + 2 S-adenosyl-L-methionine = 2-methyladenosine(37) in tRNA + 5'-deoxyadenosine + L-methionine + 2 oxidized [2Fe-2S]-[ferredoxin] + S-adenosyl-L-homocysteine. Its function is as follows. Specifically methylates position 2 of adenine 2503 in 23S rRNA and position 2 of adenine 37 in tRNAs. This is Probable dual-specificity RNA methyltransferase RlmN from Prochlorococcus marinus (strain NATL2A).